The primary structure comprises 158 residues: MRKAKPKKRQILSDAVFGSQRVTKFVNHLMYDGKKSMAFNIFYSALEKVRAKLSDEQKSSLEIWEHALNNITPLVEVKSRRVGGATFQVPTEIYPERKETISMKNMIFFARKRDGKSMADKLSAEIVDAFNSQGGAYKKKEDMRKMAEANRAFAYFRF.

This sequence belongs to the universal ribosomal protein uS7 family. In terms of assembly, part of the 30S ribosomal subunit. Contacts proteins S9 and S11.

In terms of biological role, one of the primary rRNA binding proteins, it binds directly to 16S rRNA where it nucleates assembly of the head domain of the 30S subunit. Is located at the subunit interface close to the decoding center, probably blocks exit of the E-site tRNA. The protein is Small ribosomal subunit protein uS7 of Azobacteroides pseudotrichonymphae genomovar. CFP2.